Here is a 374-residue protein sequence, read N- to C-terminus: Low-specificity L-threonine aldolase (374 aa).

Residue Lys-213 is modified to N6-(pyridoxal phosphate)lysine. Positions 354 to 374 (HPHKDDGRNNKKMYSLDAIKK) are disordered.

This sequence belongs to the threonine aldolase family. In terms of assembly, homotetramer. Requires pyridoxal 5'-phosphate as cofactor.

It carries out the reaction L-threonine = acetaldehyde + glycine. The catalysed reaction is L-allo-threonine = acetaldehyde + glycine. Its pathway is amino-acid degradation; L-threonine degradation via aldolase pathway; acetaldehyde and glycine from L-threonine: step 1/1. In Candida albicans (Yeast), this protein is Low-specificity L-threonine aldolase (GLY1).